Here is a 492-residue protein sequence, read N- to C-terminus: Probable cytosol aminopeptidase (492 aa).

Residues K262 and D267 each contribute to the Mn(2+) site. The active site involves K274. Residues D286, D345, and E347 each contribute to the Mn(2+) site. The active site involves R349.

This sequence belongs to the peptidase M17 family. Mn(2+) is required as a cofactor.

The protein localises to the cytoplasm. The catalysed reaction is Release of an N-terminal amino acid, Xaa-|-Yaa-, in which Xaa is preferably Leu, but may be other amino acids including Pro although not Arg or Lys, and Yaa may be Pro. Amino acid amides and methyl esters are also readily hydrolyzed, but rates on arylamides are exceedingly low.. It catalyses the reaction Release of an N-terminal amino acid, preferentially leucine, but not glutamic or aspartic acids.. Presumably involved in the processing and regular turnover of intracellular proteins. Catalyzes the removal of unsubstituted N-terminal amino acids from various peptides. This is Probable cytosol aminopeptidase from Acaryochloris marina (strain MBIC 11017).